A 364-amino-acid chain; its full sequence is tRNA 2-selenouridine synthase (364 aa).

In terms of domain architecture, Rhodanese spans 14–137 (LIADTPIIDV…LRQTAIQATI (124 aa)). C97 acts as the S-selanylcysteine intermediate in catalysis.

The protein belongs to the SelU family. As to quaternary structure, monomer.

The enzyme catalyses 5-methylaminomethyl-2-thiouridine(34) in tRNA + selenophosphate + (2E)-geranyl diphosphate + H2O + H(+) = 5-methylaminomethyl-2-selenouridine(34) in tRNA + (2E)-thiogeraniol + phosphate + diphosphate. It catalyses the reaction 5-methylaminomethyl-2-thiouridine(34) in tRNA + (2E)-geranyl diphosphate = 5-methylaminomethyl-S-(2E)-geranyl-thiouridine(34) in tRNA + diphosphate. The catalysed reaction is 5-methylaminomethyl-S-(2E)-geranyl-thiouridine(34) in tRNA + selenophosphate + H(+) = 5-methylaminomethyl-2-(Se-phospho)selenouridine(34) in tRNA + (2E)-thiogeraniol. It carries out the reaction 5-methylaminomethyl-2-(Se-phospho)selenouridine(34) in tRNA + H2O = 5-methylaminomethyl-2-selenouridine(34) in tRNA + phosphate. Involved in the post-transcriptional modification of the uridine at the wobble position (U34) of tRNA(Lys), tRNA(Glu) and tRNA(Gln). Catalyzes the conversion of 2-thiouridine (S2U-RNA) to 2-selenouridine (Se2U-RNA). Acts in a two-step process involving geranylation of 2-thiouridine (S2U) to S-geranyl-2-thiouridine (geS2U) and subsequent selenation of the latter derivative to 2-selenouridine (Se2U) in the tRNA chain. The protein is tRNA 2-selenouridine synthase of Shigella dysenteriae serotype 1 (strain Sd197).